Consider the following 643-residue polypeptide: Enzymatic polyprotein (643 aa).

Residues 6 to 209 (NPNATFITVK…KEVNVPNNIP (204 aa)) enclose the Peptidase A3A domain. The active-site For protease activity is Asp-26. In terms of domain architecture, Reverse transcriptase spans 226 to 410 (VRKGIIEESK…QTIDFLGLTL (185 aa)). Mg(2+) contacts are provided by Asp-296, Asp-360, and Asp-361.

Belongs to the caulimoviridae enzymatic polyprotein family.

It catalyses the reaction DNA(n) + a 2'-deoxyribonucleoside 5'-triphosphate = DNA(n+1) + diphosphate. Its function is as follows. Encodes for at least two polypeptides: protease (PR) and reverse transcriptase (RT). The protease processes the polyprotein in cis. Reverse transcriptase is multifunctional enzyme that converts the viral RNA genome into dsDNA in viral cytoplasmic capsids. This enzyme displays a DNA polymerase activity that can copy either DNA or RNA templates, and a ribonuclease H (RNase H) activity that cleaves the RNA strand of RNA-DNA heteroduplexes in a partially processive 3'- to 5'-endonucleasic mode. Neo-synthesized pregenomic RNA (pgRNA) are encapsidated, and reverse-transcribed inside the nucleocapsid. Partial (+)DNA is synthesized from the (-)DNA template and generates the relaxed circular DNA (RC-DNA) genome. After budding and infection, the RC-DNA migrates in the nucleus, and is converted into a plasmid-like covalently closed circular DNA (cccDNA). The sequence is that of Enzymatic polyprotein from Cestrum parqui (CmYLCV).